Consider the following 229-residue polypeptide: Vacuolar protein-sorting-associated protein 60 (229 aa).

Positions 9–155 form a coiled coil; the sequence is NKKSHDQLLQ…QGDELQEVLA (147 aa). At serine 12 the chain carries Phosphoserine. Residues 128–159 form an interaction with VTA1 region; the sequence is INIDKLQDMQDEMLDLIEQGDELQEVLAMNNN. Residues 186-229 form a disordered region; that stretch reads PTSENSLGNDMPSYLLGANAPPAFIDEEPNLDTEDKNKALESAQ. Residues 218–229 are compositionally biased toward basic and acidic residues; the sequence is TEDKNKALESAQ.

Belongs to the SNF7 family. In terms of assembly, interacts with VTA1; the interaction occurs at he endosomal membrane.

The protein localises to the endosome membrane. It is found in the vacuole membrane. Its function is as follows. Has a role in a late stage of multivesicular body (MVB) formation. Can stimulate VPS4 ATPase activity via VTA1. In Saccharomyces cerevisiae (strain ATCC 204508 / S288c) (Baker's yeast), this protein is Vacuolar protein-sorting-associated protein 60 (VPS60).